We begin with the raw amino-acid sequence, 128 residues long: Large ribosomal subunit protein bL12 (128 aa).

This sequence belongs to the bacterial ribosomal protein bL12 family. As to quaternary structure, homodimer. Part of the ribosomal stalk of the 50S ribosomal subunit. Forms a multimeric L10(L12)X complex, where L10 forms an elongated spine to which 2 to 4 L12 dimers bind in a sequential fashion. Binds GTP-bound translation factors.

Forms part of the ribosomal stalk which helps the ribosome interact with GTP-bound translation factors. Is thus essential for accurate translation. This Picosynechococcus sp. (strain ATCC 27264 / PCC 7002 / PR-6) (Agmenellum quadruplicatum) protein is Large ribosomal subunit protein bL12.